The primary structure comprises 275 residues: tRNA (guanine-N(7)-)-methyltransferase (275 aa).

The disordered stretch occupies residues M1–L73. Residues A46–R59 show a composition bias toward basic residues. Residues E107, E132, D159, and D182 each contribute to the S-adenosyl-L-methionine site. Residue D182 is part of the active site. Substrate contacts are provided by residues K186, D218, and T254 to E257.

The protein belongs to the class I-like SAM-binding methyltransferase superfamily. TrmB family.

The enzyme catalyses guanosine(46) in tRNA + S-adenosyl-L-methionine = N(7)-methylguanosine(46) in tRNA + S-adenosyl-L-homocysteine. It functions in the pathway tRNA modification; N(7)-methylguanine-tRNA biosynthesis. Its function is as follows. Catalyzes the formation of N(7)-methylguanine at position 46 (m7G46) in tRNA. This chain is tRNA (guanine-N(7)-)-methyltransferase, found in Mycobacterium sp. (strain KMS).